The following is a 358-amino-acid chain: Src kinase-associated phosphoprotein 2 (358 aa).

A phosphoserine mark is found at serine 6 and serine 9. Residues 60 to 108 (PQEFQDKGDAEEGDEYDDPFAGPPDTISLASERYDKDDDGPSDGNQFPP) are disordered. A Phosphotyrosine modification is found at tyrosine 75. 2 positions are modified to phosphoserine: serine 87 and serine 90. Positions 116 to 219 (FVIKAGYLEK…WVQQLKFILQ (104 aa)) constitute a PH domain. Phosphotyrosine is present on residues tyrosine 151 and tyrosine 197. Serine 223 carries the post-translational modification Phosphoserine. Positions 227–293 (PEDEDEKGDL…DSVQHPSGDK (67 aa)) are disordered. Positions 243-253 (PVPVSSPQRSQ) are enriched in low complexity. Acidic residues predominate over residues 255 to 270 (IDDEIYEELPEEEEDT). Position 260 is a phosphotyrosine (tyrosine 260). 3 positions are modified to phosphoserine: serine 272, serine 282, and serine 285. Positions 274–293 (KMDEQGKGSRDSVQHPSGDK) are enriched in basic and acidic residues. The 62-residue stretch at 296-357 (DYANFYQGLW…PKAYLMEMYD (62 aa)) folds into the SH3 domain.

The protein belongs to the SKAP family. In terms of assembly, interacts with FYB1, which is required for SKAP2 protein stability. Interacts with PTPNS1. Part of a complex consisting of SKAP2, FYB1 and PTPNS1. Part of a complex consisting of SKAP2, FYB1 and LILRB3. Interacts with LAT, GRB2, PTK2B, and PRAM1. May interact with actin. May interact with FYN, HCK and LYN. Interacts with FASLG.

The protein resides in the cytoplasm. Functionally, may be involved in B-cell and macrophage adhesion processes. In B-cells, may act by coupling the B-cell receptor (BCR) to integrin activation. May play a role in src signaling pathway. The chain is Src kinase-associated phosphoprotein 2 (Skap2) from Rattus norvegicus (Rat).